The following is a 365-amino-acid chain: uncharacterized protein (365 aa).

ATP is bound at residue 31–38; that stretch reads GPINSGKT.

Belongs to the archaeal ATPase family.

This is an uncharacterized protein from Methanocaldococcus jannaschii (strain ATCC 43067 / DSM 2661 / JAL-1 / JCM 10045 / NBRC 100440) (Methanococcus jannaschii).